Consider the following 385-residue polypeptide: Odorant receptor 47a (385 aa).

Over 1 to 33 (MDSFLQVQKSTIALLGFDLFSENREMWKRPYRA) the chain is Cytoplasmic. Residues 34-54 (MNVFSIAAIFPFILAAVLHNW) traverse the membrane as a helical segment. The Extracellular segment spans residues 55–62 (KNVLLLAD). The helical transmembrane segment at 63-83 (AMVALLITILGLFKFSMILYL) threads the bilayer. The Cytoplasmic portion of the chain corresponds to 84–129 (RRDFKRLIDKFRLLMSNEAEQGEEYAEILNAANKQDQRMCTLFRTC). The helical transmembrane segment at 130 to 150 (FLLAWALNSVLPLVRMGLSYW) threads the bilayer. Topologically, residues 151–175 (LAGHAEPELPFPCLFPWNIHIIRNY) are extracellular. A helical membrane pass occupies residues 176–196 (VLSFIWSAFASTGVVLPAVSL). At 197-255 (DTIFCSFTSNLCAFFKIAQYKVVRFKGGSLKESQATLNKVFALYQTSLDMCNDLNQCYQ) the chain is on the cytoplasmic side. Residues 256–276 (PIICAQFFISSLQLCMLGYLF) form a helical membrane-spanning segment. Over 277-284 (SITFAQTE) the chain is Extracellular. Residues 285 to 305 (GVYYASFIATIIIQAYIYCYC) traverse the membrane as a helical segment. Topologically, residues 306 to 357 (GENLKTESASFEWAIYDSPWHESLGAGGASTSICRSLLISMMRAHRGFRITG) are cytoplasmic. Residues 358-378 (YFFEANMEAFSSIVRTAMSYI) traverse the membrane as a helical segment. At 379 to 385 (TMLRSFS) the chain is on the extracellular side.

This sequence belongs to the insect chemoreceptor superfamily. Heteromeric odorant receptor channel (TC 1.A.69) family. Or1a subfamily. As to quaternary structure, interacts with Orco. Complexes exist early in the endomembrane system in olfactory sensory neurons (OSNs), coupling these complexes to the conserved ciliary trafficking pathway. As to expression, expressed with Orco in 40 olfactory receptor neurons in a broad area across the antenna, including both anterior and posterior faces. This expression pattern matches the distribution of the small sensilla basiconica. Expression in the antenna is observed late in antennal development at 93 hours APF.

The protein localises to the cell membrane. Odorant receptor which mediates acceptance or avoidance behavior, depending on its substrates. The odorant receptor repertoire encodes a large collection of odor stimuli that vary widely in identity, intensity, and duration. Complexes with Orco to form odorant-sensing units, providing sensitive and prolonged odorant signaling and calcium permeability. They are necessary and sufficient to promote functional reconstitution of odor-evoked signaling in sensory neurons that normally respond only to carbon dioxide. Involved in the behavioral responses to esters. Involved in the behavioral responses to pentyl acetate. The polypeptide is Odorant receptor 47a (Or47a) (Drosophila melanogaster (Fruit fly)).